The sequence spans 162 residues: Caveolin-2 (162 aa).

The Cytoplasmic segment spans residues Met1–Lys86. At Tyr19 the chain carries Phosphotyrosine; by SRC. The segment at Tyr19–Arg40 is disordered. Ser20 and Ser23 each carry phosphoserine. Tyr27 is subject to Phosphotyrosine; by SRC. The segment covering Glu29–Arg40 has biased composition (basic and acidic residues). Ser36 is subject to Phosphoserine. Residues Val87 to Leu107 constitute an intramembrane region (helical). The Cytoplasmic portion of the chain corresponds to Ser108–Glu162.

Belongs to the caveolin family. As to quaternary structure, monomer or homodimer. Interacts with CAV1; the interaction forms a stable heterooligomeric complex that is required for targeting to lipid rafts and for caveolae formation. Tyrosine phosphorylated forms do not form heterooligomers with the Tyr-19-phosphorylated form existing as a monomer or dimer, and the Tyr-27-form as a monomer only. Interacts (tyrosine phosphorylated form) with the SH2 domain-containing proteins, RASA1, NCK1 and SRC. Interacts (tyrosine phosphorylated form) with INSR, the interaction (Tyr-27-phosphorylated form) is increased on insulin stimulation. Interacts (Tyr-19 phosphorylated form) with MAPK1 (phosphorylated form); the interaction, promoted by insulin, leads to nuclear location and MAPK1 activation. Interacts with STAT3; the interaction is increased on insulin-induced tyrosine phosphorylation leading to STAT activation. In terms of processing, phosphorylated on serine and tyrosine residues. CAV1 promotes phosphorylation on Ser-23 which then targets the complex to the plasma membrane, lipid rafts and caveolae. Phosphorylation on Ser-36 appears to modulate mitosis in endothelial cells. Phosphorylation on both Tyr-19 and Tyr-27 is required for insulin-induced 'Ser-727' phosphorylation of STAT3 and its activation. Phosphorylation on Tyr-19 is required for insulin-induced phosphorylation of MAPK1 and DNA binding of STAT3. Tyrosine phosphorylation is induced by both EGF and insulin (By. similarity).

It localises to the nucleus. The protein resides in the cytoplasm. The protein localises to the golgi apparatus membrane. It is found in the cell membrane. Its subcellular location is the membrane. It localises to the caveola. Its function is as follows. May act as a scaffolding protein within caveolar membranes. Interacts directly with G-protein alpha subunits and can functionally regulate their activity. Acts as an accessory protein in conjunction with CAV1 in targeting to lipid rafts and driving caveolae formation. The Ser-36 phosphorylated form has a role in modulating mitosis in endothelial cells. Positive regulator of cellular mitogenesis of the MAPK signaling pathway. Required for the insulin-stimulated nuclear translocation and activation of MAPK1 and STAT3, and the subsequent regulation of cell cycle progression. The protein is Caveolin-2 (CAV2) of Didelphis virginiana (North American opossum).